The following is a 616-amino-acid chain: Protein cereblon (616 aa).

Disordered regions lie at residues 1 to 39, 63 to 137, and 182 to 220; these read MDEEETAEINAQEQEVAGSAGEAAAGPSGAEVQPNDDSV, FGPS…AMPR, and SQERRRSRNSDEVSPEAEDDELPEHPPPPPPRPPIDIDM. Residues 11 to 32 are compositionally biased toward low complexity; the sequence is AQEQEVAGSAGEAAAGPSGAEV. Over residues 96–107 the composition is skewed to acidic residues; sequence SEEDIVLDDGTE. A compositionally biased stretch (basic and acidic residues) spans 183 to 192; sequence QERRRSRNSD. Positions 194–203 are enriched in acidic residues; that stretch reads VSPEAEDDEL. Residues 206–215 are compositionally biased toward pro residues; that stretch reads HPPPPPPRPP. A Lon N-terminal domain is found at 257 to 482; it reads HMLIFLHQYI…LIGGILKEET (226 aa). The CULT domain occupies 481–590; it reads ETLFYCRYCN…LAGSSVRIGK (110 aa). The Zn(2+) site is built by Cys-486, Cys-489, Cys-555, and Cys-558.

Belongs to the CRBN family. Likely a component of a DCX (DDB1-CUL4-X-box) protein ligase complex. May interact with pic/DDB1. In terms of processing, ubiquitinated.

It localises to the nucleus. The protein operates within protein modification; protein ubiquitination. Its function is as follows. Substrate recognition component of a DCX (DDB1-CUL4-X-box) E3 protein ligase complex that mediates the ubiquitination and subsequent proteasomal degradation of target proteins. Has an essential role in mediating growth by negatively regulating insulin signaling. It also has a role in maintaining presynaptic function in the neuromuscular junction synapses of third-instar larvae. In Drosophila pseudoobscura pseudoobscura (Fruit fly), this protein is Protein cereblon.